The sequence spans 1907 residues: MVWGTGYGNPSPLNPYGFASLHRGGLNPLILAPENITFDTLNTHNDHEETHGESPEVPKASIAPAGRQNVPVLQQNQENEDNHALGGSEDAKDEREIRFSAIKTLYNYYSEGPSTPIMPHLVNRLRGLDALAKIDATLTKVDMNAAYIFALRPTFPYSYGYKQRFSNRRLTTSALCYARTGLSSFLTVDKTYTSNSPLKGGSRGWPIFNVDVSSHVAEPHMRTLSPIGLEVFNLATSQFSKTLLTASSKVFTQSLYTADILSIFGEVFLPHVMQPVSNYTPILVRALLALIHILGPGSGNCSLSSSIFESSIPQFLTVSHSTNMSNRTRYCLHTRSAYKDMFRNGIPPQSTLPPTLAPEGSSARVLIPEALVTSPMFPWLLILVSSGPQFFLYSKDASINTVDIGSRGRITSPIPDVAKLDLHRLWNLFRFDGYRYIDVVIVGADRDYVWPYQNGVYVHGGKGPNGTGNYGNADVHDGIGTIFSSFNNNVNVQTSDLMLGLLTLWNHITTTYATEEEVTMAIKIAAAFALVYPVQPIVYSGCPKAFQRHTSYYQPSSENCYATDTAEVKSVWDTVELSVQVNNAMVLGMTLPFGQPTLSSAQWYNNIDKAEISMFKVGNLPLQNLDYLSLDMMEFYAPTTGQLYDIRSDNLILSAHRTVNLGIGYTALADFFAYLASVPAQSFYHDRMVTSPISKQTYSVYERFIERFIDDFVGWDRCDLFNLDTLLGAKHIAGVASSPIPWHCSLQRCPLPIIMHYTGLTFGQEHITVRDVAGVEGLQQIVMRDFQGRIVVERLGTAAPSRIAVKLDWSRLSAWYSDTTCAIPLIRSCDGDRQLRGNMGSYTGKTRTGFVYTYFSPNFLSSFNVSEPIFNTSINLTPPYDDTSQAVIQNLSMPQMLSFDPYYESTFYVVSADNEWIPTSGPAWKVPYLENVVKRSGRRLLAELRIASNNGSGDRTFLTTCKTRKGRHFTYFSAALGGKILEFVCAPLSSISLQGGQTIYAPIQLQDVIPVRKEDPVPGSIYAVFKFFSEPKAWEARALKSYKVRFQDLPSHIVISELKERAARSYIGSRGYVDTGFKALDIYIDILSQMELPKYIHEFLILLRGKVCEVSRLYKKEQVFVILLTVFSELTAIVRHRGNKSTGSMGRMWTLLSDFETLLGKVSYKNPSIIEEQVVPWLTSDPIPRTPDFYSTYFKTAVQFMHRTFVPVTLRSAPPLTFHEYCGRPELWGTTGSGYIGYGKRSFNKWSIYGAYPTEEIYRLALYGDNPPLKPLEKPELTKVRAVISASLQSYILMSYLEYIMADTIVDKAFTTTLMNDRQLENLERHMMTMTGGVRVPVDQSNFDRQPDLVQIGIWQQLLFHLASASAPYRARDSVSLVISRLASTTTFPNLKVRMSDGDKRVLHGLPSGWKWTALLGALINVTQLLTMAELSNTLASLRSTVVQGDDIALSMTDREQATQLVDTYARQGFEVNPKKFWISPDRDEFLRRVATPGIVAGYPARMMIKLLYQLTEPEEPSHYISMLPKLAKVPNVVQEHVKPRSDVPWSETVEELDWREALAILRHRPARTSELVTQWLQLIGRFTAAHPDKRALTLLYRWFVRDLTHATKIKKRNLLVLLQQPGFWGGYSQSLVGLLRTTHLADMIVSELDIGLPGPRATSSRFGTSPTSLAPHYLTLIVPSSVHVQSQKELDLWGLCRSSKYAKHYSNIFRYYKLTLPTLVLWAQRLGDKHVTDFIRSVTLGSEIPKYDPHARLFTSNGVSVGMLIRIRVRHFTHRVLRRETPKCIPVIVGLYREQTLSVPESVRLSEPDKILLSLQRASGYSLNLVKKILQITRKPVDHPVDARFSQAFPNNWSDLARTAGTFLLTVPAEVSGDNADLVPERLGFNHSSWLHAIFRSRKFLLCVVA.

Residues 42 to 61 (NTHNDHEETHGESPEVPKAS) form a disordered region. Basic and acidic residues predominate over residues 44–56 (HNDHEETHGESPE).

The protein belongs to the totiviridae RNA-directed RNA polymerase family.

It carries out the reaction RNA(n) + a ribonucleoside 5'-triphosphate = RNA(n+1) + diphosphate. Its function is as follows. RNA-dependent RNA polymerase which replicates the viral genome. Catalyzes the transcription of fully conservative plus-strand genomic RNAs that are extruded from the virion into the cytoplasm where they function as mRNAs for translation of viral proteins and also as substrates for encapsidation to form new virions. Once encapsidated, the positive strand is converted to dsRNA by the RNA-directed RNA polymerase. Displays ssRNA-binding activity. The sequence is that of Probable RNA-directed RNA polymerase (gag-pol) from Giardia intestinalis (Giardia lamblia).